A 1481-amino-acid polypeptide reads, in one-letter code: RNA helicase aquarius (1481 aa).

The segment at 1–416 (MAAPAQPKKI…LVSRHERRIS (416 aa)) is helical region with structural similarity to ARM repeat domains. The tract at residues 417–1481 (QIQQLNQMPL…DAESVPTETE (1065 aa)) is required for assembly of the IB complex. The interval 754–773 (RSGKGKKRKDADGEEDDTEE) is disordered. ATP-binding positions include Gln801, Gln806, and 826 to 831 (GTGKTD). N6-acetyllysine is present on Lys1055. Residues 1396 to 1414 (EEGEEGQSQETEMEAEEET) show a composition bias toward acidic residues. The interval 1396–1481 (EEGEEGQSQE…DAESVPTETE (86 aa)) is disordered. Residues 1418–1448 (QGNLTPSPADASLSQETPAAQPDCSSQTEDT) show a composition bias toward polar residues. Residues 1455 to 1468 (ATAAEPVSAAAEAA) are compositionally biased toward low complexity.

It belongs to the CWF11 family. Identified in the spliceosome C complex. Component of the XAB2 complex, a multimeric protein complex composed of XAB2, PRPF19, AQR, ZNF830, ISY1, and PPIE. Identified in a pentameric intron-binding (IB) complex composed of AQR, XAB2, ISY1, ZNF830 and PPIE that is incorporated into the spliceosome as a preassembled complex. The IB complex does not contain PRPF19. Within the spliceosome, interacts with SNRPA1, SF3B1, SF3B3, SF3A1 and SF3A2.

It is found in the nucleus. The protein localises to the nucleoplasm. The catalysed reaction is ATP + H2O = ADP + phosphate + H(+). Its function is as follows. Involved in pre-mRNA splicing as component of the spliceosome. Intron-binding spliceosomal protein required to link pre-mRNA splicing and snoRNP (small nucleolar ribonucleoprotein) biogenesis. Plays a key role in position-dependent assembly of intron-encoded box C/D small snoRNP, splicing being required for snoRNP assembly. May act by helping the folding of the snoRNA sequence. Binds to intron of pre-mRNAs in a sequence-independent manner, contacting the region between snoRNA and the branchpoint of introns (40 nucleotides upstream of the branchpoint) during the late stages of splicing. Has ATP-dependent RNA helicase activity and can unwind double-stranded RNA molecules with a 3' overhang (in vitro). The polypeptide is RNA helicase aquarius (Aqr) (Mus musculus (Mouse)).